Reading from the N-terminus, the 90-residue chain is Mitochondrial import inner membrane translocase subunit Tim10-B (90 aa).

The short motif at 29 to 54 (CHKKCVPPHYKEAELSKGESVCLDRC) is the Twin CX3C motif element. 2 disulfide bridges follow: C29–C54 and C33–C50.

Belongs to the small Tim family. Heterohexamer; composed of 3 copies of TIMM9 and 3 copies of TIMM10/TIM10A, named soluble 70 kDa complex. The complex forms a 6-bladed alpha-propeller structure and associates with the TIMM22 component of the TIM22 complex. Interacts with multi-pass transmembrane proteins in transit.

The protein localises to the mitochondrion inner membrane. Functionally, mitochondrial intermembrane chaperone that participates in the import and insertion of multi-pass transmembrane proteins into the mitochondrial inner membrane. May also be required for the transfer of beta-barrel precursors from the TOM complex to the sorting and assembly machinery (SAM complex) of the outer membrane. Acts as a chaperone-like protein that protects the hydrophobic precursors from aggregation and guide them through the mitochondrial intermembrane space. The protein is Mitochondrial import inner membrane translocase subunit Tim10-B (timm10-b) of Xenopus laevis (African clawed frog).